Consider the following 96-residue polypeptide: Ubiquitin-related modifier 1 (96 aa).

Residue glycine 96 is modified to 1-thioglycine. Glycine 96 participates in a covalent cross-link: Glycyl lysine isopeptide (Gly-Lys) (interchain with K-? in acceptor proteins).

This sequence belongs to the URM1 family. C-terminal thiocarboxylation occurs in 2 steps, it is first acyl-adenylated (-COAMP) via the hesA/moeB/thiF part of UBA4, then thiocarboxylated (-COSH) via the rhodanese domain of UBA4.

Its subcellular location is the cytoplasm. It participates in tRNA modification; 5-methoxycarbonylmethyl-2-thiouridine-tRNA biosynthesis. Its function is as follows. Acts as a sulfur carrier required for 2-thiolation of mcm(5)S(2)U at tRNA wobble positions of cytosolic tRNA(Lys), tRNA(Glu) and tRNA(Gln). Serves as sulfur donor in tRNA 2-thiolation reaction by being thiocarboxylated (-COSH) at its C-terminus by the MOCS3 homolog UBA4. The sulfur is then transferred to tRNA to form 2-thiolation of mcm(5)S(2)U. Prior mcm(5) tRNA modification by the elongator complex is required for 2-thiolation. Also acts as a ubiquitin-like protein (UBL) that is covalently conjugated via an isopeptide bond to lysine residues of target proteins such as AHP1. The thiocarboxylated form serves as substrate for conjugation and oxidative stress specifically induces the formation of UBL-protein conjugates. This chain is Ubiquitin-related modifier 1, found in Encephalitozoon cuniculi (strain GB-M1) (Microsporidian parasite).